A 406-amino-acid polypeptide reads, in one-letter code: Acetate kinase (406 aa).

Asn-7 lines the Mg(2+) pocket. Residue Lys-14 participates in ATP binding. Residue Arg-90 participates in substrate binding. Catalysis depends on Asp-147, which acts as the Proton donor/acceptor. Residues His-207 to Gly-211, Asp-283 to Arg-285, and Gly-331 to Asn-335 each bind ATP. Mg(2+) is bound at residue Glu-385.

Belongs to the acetokinase family. As to quaternary structure, homodimer. It depends on Mg(2+) as a cofactor. Requires Mn(2+) as cofactor.

Its subcellular location is the cytoplasm. It catalyses the reaction acetate + ATP = acetyl phosphate + ADP. Its pathway is metabolic intermediate biosynthesis; acetyl-CoA biosynthesis; acetyl-CoA from acetate: step 1/2. Catalyzes the formation of acetyl phosphate from acetate and ATP. Can also catalyze the reverse reaction. In Thermosipho africanus (strain TCF52B), this protein is Acetate kinase.